A 155-amino-acid chain; its full sequence is E3 ubiquitin-protein ligase RHA2A (155 aa).

The RING-type; atypical zinc-finger motif lies at 86 to 128 (CVVCLSKLKEGEEVRKLECRHVFHKKCLEGWLHQFNFTCPLCR).

As to quaternary structure, interacts with NAC019 and NAC055. In terms of tissue distribution, expressed in stems, flowers, cauline leaves, rosettes, siliques, seeds and roots.

The protein resides in the cytoplasm. It localises to the nucleus. It carries out the reaction S-ubiquitinyl-[E2 ubiquitin-conjugating enzyme]-L-cysteine + [acceptor protein]-L-lysine = [E2 ubiquitin-conjugating enzyme]-L-cysteine + N(6)-ubiquitinyl-[acceptor protein]-L-lysine.. The protein operates within protein modification; protein ubiquitination. Functionally, E3 ubiquitin-protein ligase involved in the positive regulation of abscisic acid (ABA) signaling and responses to salt and osmotic stresses during seed germination and early seedling development. Acts additively with RHA2B in regulating ABA signaling and drought response. Possesses E3 ubiquitin ligase activity in vitro. This chain is E3 ubiquitin-protein ligase RHA2A, found in Arabidopsis thaliana (Mouse-ear cress).